We begin with the raw amino-acid sequence, 444 residues long: S-locus-specific glycoprotein BS29-1 (444 aa).

Residues 1-28 (MRGVIPNYHHSYTLLFFVILVLFPHVFS) form the signal peptide. One can recognise a Bulb-type lectin domain in the interval 31–159 (TLSPNEALTI…KTTALDRFMW (129 aa)). N43, N125, N180, N243, and N396 each carry an N-linked (GlcNAc...) asparagine glycan. The region spanning 356–437 (CGEGDGFLRM…GGQDLYLKVA (82 aa)) is the PAN domain. 2 disulfide bridges follow: C387/C412 and C395/C397.

In terms of tissue distribution, stigma.

In terms of biological role, involved in sporophytic self-incompatibility system (the inability of flowering plants to achieve self-fertilization). The sequence is that of S-locus-specific glycoprotein BS29-1 (SLSG) from Brassica oleracea var. alboglabra (Chinese kale).